The following is a 1058-amino-acid chain: Ubiquitin-like modifier-activating enzyme 1 (1058 aa).

Residues 1 to 46 (MSSSPLSKKRRVSGPDPKPGSNCSPAQSALSEVSSVPTNGMAKNGS) form a disordered region. Ser-2 carries the N-acetylserine modification. A phosphoserine mark is found at Ser-4, Ser-13, Ser-21, Ser-24, and Ser-46. Positions 21–38 (SNCSPAQSALSEVSSVPT) are enriched in polar residues. At Tyr-55 the chain carries Phosphotyrosine. Repeat copies occupy residues 63–199 (GHEA…GQLF) and 459–611 (GSDF…QVVI). The interval 63–611 (GHEAMKMLQT…GTKGNVQVVI (549 aa)) is 2 approximate repeats. Residues Ala-478, Asp-504, Arg-515, Lys-528, and 576-577 (DN) each bind ATP. An N6-succinyllysine modification is found at Lys-528. Cys-632 acts as the Glycyl thioester intermediate in catalysis. Lys-671 carries the N6-acetyllysine modification. Position 800 is a phosphothreonine (Thr-800). 4 positions are modified to phosphoserine: Ser-810, Ser-816, Ser-820, and Ser-835. An N6-acetyllysine modification is found at Lys-980.

This sequence belongs to the ubiquitin-activating E1 family. In terms of assembly, monomer. Interacts with GAN (via BTB domain). Post-translationally, ISGylated. In terms of tissue distribution, ubiquitously expressed. In testis, expressed in A spermatogonia and spermatids but at very low levels in pachytene spermatocytes.

Its subcellular location is the cytoplasm. It localises to the mitochondrion. The protein localises to the nucleus. It catalyses the reaction ATP + ubiquitin + [E1 ubiquitin-activating enzyme]-L-cysteine = AMP + diphosphate + S-ubiquitinyl-[E1 ubiquitin-activating enzyme]-L-cysteine.. Its pathway is protein modification; protein ubiquitination. In terms of biological role, catalyzes the first step in ubiquitin conjugation to mark cellular proteins for degradation through the ubiquitin-proteasome system. Activates ubiquitin by first adenylating its C-terminal glycine residue with ATP, and thereafter linking this residue to the side chain of a cysteine residue in E1, yielding a ubiquitin-E1 thioester and free AMP. Essential for the formation of radiation-induced foci, timely DNA repair and for response to replication stress. Promotes the recruitment of TP53BP1 and BRCA1 at DNA damage sites. This chain is Ubiquitin-like modifier-activating enzyme 1 (Uba1), found in Mus musculus (Mouse).